We begin with the raw amino-acid sequence, 117 residues long: Ig heavy chain V region G4 (117 aa).

The first 19 residues, Met1 to Ser19, serve as a signal peptide directing secretion. Residues Glu20–Ser49 form a framework-1 region. A disulfide bond links Cys41 and Cys115. The tract at residues Asp50–Ala54 is complementarity-determining-1. The interval Trp55–Gly68 is framework-2. Positions Glu69–Gly85 are complementarity-determining-2. The tract at residues Arg86–Arg117 is framework-3.

This chain is Ig heavy chain V region G4 (G4), found in Caiman crocodilus (Spectacled caiman).